The following is a 361-amino-acid chain: Phosphoserine aminotransferase (361 aa).

Residue Arg43 coordinates L-glutamate. Residues 77 to 78 (AS), Trp103, Thr153, Asp173, and Gln196 contribute to the pyridoxal 5'-phosphate site. An N6-(pyridoxal phosphate)lysine modification is found at Lys197. 238–239 (NT) lines the pyridoxal 5'-phosphate pocket.

Belongs to the class-V pyridoxal-phosphate-dependent aminotransferase family. SerC subfamily. In terms of assembly, homodimer. Requires pyridoxal 5'-phosphate as cofactor.

The protein resides in the cytoplasm. It catalyses the reaction O-phospho-L-serine + 2-oxoglutarate = 3-phosphooxypyruvate + L-glutamate. The catalysed reaction is 4-(phosphooxy)-L-threonine + 2-oxoglutarate = (R)-3-hydroxy-2-oxo-4-phosphooxybutanoate + L-glutamate. It functions in the pathway amino-acid biosynthesis; L-serine biosynthesis; L-serine from 3-phospho-D-glycerate: step 2/3. It participates in cofactor biosynthesis; pyridoxine 5'-phosphate biosynthesis; pyridoxine 5'-phosphate from D-erythrose 4-phosphate: step 3/5. In terms of biological role, catalyzes the reversible conversion of 3-phosphohydroxypyruvate to phosphoserine and of 3-hydroxy-2-oxo-4-phosphonooxybutanoate to phosphohydroxythreonine. This Pseudomonas entomophila (strain L48) protein is Phosphoserine aminotransferase.